Consider the following 107-residue polypeptide: Growth-regulated alpha protein (107 aa).

An N-terminal signal peptide occupies residues 1-34 (MARAALSAAPSNPRLLRVALLLLLLVAAGRRAAG). 2 cysteine pairs are disulfide-bonded: Cys43–Cys69 and Cys45–Cys85.

It belongs to the intercrine alpha (chemokine CxC) family. Post-translationally, N-terminal processed forms GRO-alpha(4-73), GRO-alpha(5-73) and GRO-alpha(6-73) are produced by proteolytic cleavage after secretion from peripheral blood monocytes.

Its subcellular location is the secreted. Functionally, has chemotactic activity for neutrophils. May play a role in inflammation and exerts its effects on endothelial cells in an autocrine fashion. In vitro, the processed forms GRO-alpha(4-73), GRO-alpha(5-73) and GRO-alpha(6-73) show a 30-fold higher chemotactic activity. The protein is Growth-regulated alpha protein (CXCL1) of Homo sapiens (Human).